A 61-amino-acid chain; its full sequence is uncharacterized protein (61 aa).

A disordered region spans residues 39-61; it reads PRPFTPGLADPRRLGPRRVQAAQ.

This is an uncharacterized protein from Pan troglodytes (Chimpanzee).